A 378-amino-acid chain; its full sequence is Alcohol dehydrogenase 1 (378 aa).

Cysteine 48 is a binding site for Zn(2+). Residue 49–53 (HTDVL) participates in NAD(+) binding. Histidine 69, cysteine 99, cysteine 102, cysteine 105, cysteine 113, and cysteine 177 together coordinate Zn(2+). NAD(+)-binding positions include 202–207 (GIGTVG), aspartate 226, lysine 231, 274–276 (TGV), 297–299 (IGA), and 321–323 (TAF).

Belongs to the zinc-containing alcohol dehydrogenase family. Class-IV subfamily. As to quaternary structure, homodimer. It depends on Zn(2+) as a cofactor. In terms of tissue distribution, present in non-glandular trichome cells.

The protein resides in the nucleus. It is found in the cytoplasm. The protein localises to the cytosol. The enzyme catalyses (+)-artemisinic alcohol + NAD(+) = (+)-artemisinic aldehyde + NADH + H(+). The protein operates within sesquiterpene biosynthesis. Involved in the biosynthesis of the antimalarial endoperoxide artemisinin. Catalyzes the conversion of artemisinic alcohol into artemisinic aldehyde. In Artemisia annua (Sweet wormwood), this protein is Alcohol dehydrogenase 1.